The following is a 301-amino-acid chain: Ribonuclease H2 subunit A (301 aa).

The residue at position 1 (Met-1) is an N-acetylmethionine. An RNase H type-2 domain is found at 28–251 (PCVLGVDEAG…AQAILEKEAE (224 aa)). 3 residues coordinate a divalent metal cation: Asp-34, Glu-35, and Asp-142. Thr-217 is subject to Phosphothreonine. Ser-258 is modified (phosphoserine).

Belongs to the RNase HII family. Eukaryotic subfamily. As to quaternary structure, the RNase H2 complex is a heterotrimer composed of the catalytic subunit RNASEH2A and the non-catalytic subunits RNASEH2B and RNASEH2C. Mn(2+) serves as cofactor. It depends on Mg(2+) as a cofactor.

It localises to the nucleus. It carries out the reaction Endonucleolytic cleavage to 5'-phosphomonoester.. Catalytic subunit of RNase HII, an endonuclease that specifically degrades the RNA of RNA:DNA hybrids. Participates in DNA replication, possibly by mediating the removal of lagging-strand Okazaki fragment RNA primers during DNA replication. Mediates the excision of single ribonucleotides from DNA:RNA duplexes. The polypeptide is Ribonuclease H2 subunit A (Rnaseh2a) (Rattus norvegicus (Rat)).